The sequence spans 614 residues: Dolichyl-diphosphooligosaccharide--protein glycosyltransferase subunit 1A (614 aa).

The N-terminal stretch at 1-25 is a signal peptide; that stretch reads MKQSSVVDLLLLLLAIALLATPAFS. Topologically, residues 26–432 are lumenal; it reads DLVLSKVERR…QVYYKFSNIN (407 aa). 2 N-linked (GlcNAc...) asparagine glycosylation sites follow: Asn-94 and Asn-299. Lys-311 is covalently cross-linked (Glycyl lysine isopeptide (Lys-Gly) (interchain with G-Cter in ubiquitin)). N-linked (GlcNAc...) asparagine glycosylation is present at Asn-352. A helical transmembrane segment spans residues 433-453; it reads LLSEPLMLISGFFILFITCII. Over 454–614 the chain is Cytoplasmic; that stretch reads YTRADISISK…EDLLEFIDEI (161 aa).

This sequence belongs to the OST1 family. As to quaternary structure, component of the oligosaccharyltransferase (OST) complex.

It is found in the endoplasmic reticulum membrane. It functions in the pathway protein modification; protein glycosylation. Functionally, subunit of the oligosaccharyl transferase (OST) complex that catalyzes the initial transfer of a defined glycan (Glc(3)Man(9)GlcNAc(2) in eukaryotes) from the lipid carrier dolichol-pyrophosphate to an asparagine residue within an Asn-X-Ser/Thr consensus motif in nascent polypeptide chains, the first step in protein N-glycosylation. N-glycosylation occurs cotranslationally and the complex associates with the Sec61 complex at the channel-forming translocon complex that mediates protein translocation across the endoplasmic reticulum (ER). All subunits are required for a maximal enzyme activity. The protein is Dolichyl-diphosphooligosaccharide--protein glycosyltransferase subunit 1A (OST1A) of Arabidopsis thaliana (Mouse-ear cress).